We begin with the raw amino-acid sequence, 223 residues long: DNA-directed RNA polymerase III subunit RPC7 (223 aa).

Residues 111-124 (MMPRKKCKKGDPKS) are compositionally biased toward basic and acidic residues. Residues 111 to 223 (MMPRKKCKKG…SDDNMDEATY (113 aa)) are disordered. Residue T134 is modified to Phosphothreonine. The span at 144–156 (KTIEELEKRGEGE) shows a compositional bias: basic and acidic residues. S158 carries the phosphoserine modification. Acidic residues-rich tracts occupy residues 173–198 (KDDE…EEND) and 206–223 (NGDD…EATY).

It belongs to the eukaryotic RPC7 RNA polymerase subunit family. Component of the RNA polymerase III complex consisting of 17 subunits: a ten-subunit horseshoe-shaped catalytic core composed of POLR3A/RPC1, POLR3B/RPC2, POLR1C/RPAC1, POLR1D/RPAC2, POLR3K/RPC10, POLR2E/RPABC1, POLR2F/RPABC2, POLR2H/RPABC3, POLR2K/RPABC4 and POLR2L/RPABC5; a mobile stalk composed of two subunits POLR3H/RPC8 and CRCP/RPC9, protruding from the core and functioning primarily in transcription initiation; and additional subunits homologous to general transcription factors of the RNA polymerase II machinery, POLR3C/RPC3-POLR3F/RPC6-POLR3G/RPC7 heterotrimer required for transcription initiation and POLR3D/RPC4-POLR3E/RPC5 heterodimer involved in both transcription initiation and termination. Directly interacts with POLR3C/RPC62. Also found in a trimeric complex with POLR3C/RPC3 and POLR3GL. Expressed at low levels in the liver.

The protein resides in the nucleus. It is found in the cytoplasm. Its function is as follows. DNA-dependent RNA polymerase catalyzes the transcription of DNA into RNA using the four ribonucleoside triphosphates as substrates. Specific peripheric component of RNA polymerase III (Pol III) which synthesizes small non-coding RNAs including 5S rRNA, snRNAs, tRNAs and miRNAs from at least 500 distinct genomic loci. Acts as a long tether that bridges POLR3C/RPC3-POLR3F/RPC6-POLR3G/RPC7 heterotrimer and the mobile stalk of Pol III, coordinating the dynamics of Pol III stalk and clamp modules during the transition from apo to elongation state. Pol III exists as two alternative complexes defined by the mutually exclusive incorporation of subunit POLR3G/RPC7alpha or POLR3GL/RPC7beta. POLR3G/RPC7alpha modulates Pol III transcriptome by specifically enhancing the transcription of snaR-A non-coding RNAs. At resting state, occupies the active site of apo Pol III and keeps Pol III in an autoinhibitory mode, preventing non-specific transcription. Pol III plays a key role in sensing and limiting infection by intracellular bacteria and DNA viruses. Acts as a nuclear and cytosolic DNA sensor involved in innate immune response. Can sense non-self dsDNA that serves as template for transcription into dsRNA. The non-self RNA polymerase III transcripts, such as Epstein-Barr virus-encoded RNAs (EBERs), induce type I interferon and NF-kappa-B through the RIG-I pathway. This is DNA-directed RNA polymerase III subunit RPC7 (Polr3g) from Mus musculus (Mouse).